Here is a 283-residue protein sequence, read N- to C-terminus: Galactooligosaccharides transport system permease protein GanQ (283 aa).

6 consecutive transmembrane segments (helical) span residues 13 to 33 (LLFS…PLLW), 82 to 102 (ISLF…YAFS), 115 to 135 (LFLL…FVLA), 137 to 157 (ILGM…GLIP), 188 to 208 (IFFQ…AMNG), and 248 to 268 (TTFA…FIML). Residues 76–268 (YVNSMKISLF…IPVAVIFIML (193 aa)) enclose the ABC transmembrane type-1 domain.

Belongs to the binding-protein-dependent transport system permease family. As to quaternary structure, the complex is composed of two ATP-binding proteins (MsmX), two transmembrane proteins (GanP and GanQ) and a solute-binding protein (GanS).

It is found in the cell membrane. Functionally, involved in galactan degradation. Part of the ABC transporter complex GanPQS involved in the uptake of galactooligosaccharides. Responsible for the translocation of the substrate across the membrane. The sequence is that of Galactooligosaccharides transport system permease protein GanQ (ganQ) from Bacillus subtilis (strain 168).